The following is a 1262-amino-acid chain: DNA-directed RNA polymerase subunit beta' (1262 aa).

Residues cysteine 220, cysteine 294, cysteine 301, and cysteine 304 each coordinate Zn(2+).

It belongs to the RNA polymerase beta' chain family. RpoC2 subfamily. As to quaternary structure, in cyanobacteria the RNAP catalytic core is composed of 2 alpha, 1 beta, 1 beta', 1 gamma and 1 omega subunit. When a sigma factor is associated with the core the holoenzyme is formed, which can initiate transcription. Zn(2+) serves as cofactor.

It carries out the reaction RNA(n) + a ribonucleoside 5'-triphosphate = RNA(n+1) + diphosphate. Functionally, DNA-dependent RNA polymerase catalyzes the transcription of DNA into RNA using the four ribonucleoside triphosphates as substrates. In Gloeobacter violaceus (strain ATCC 29082 / PCC 7421), this protein is DNA-directed RNA polymerase subunit beta'.